The primary structure comprises 389 residues: tRNA N(3)-cytidine methyltransferase METTL2 (389 aa).

A disordered region spans residues 1 to 20 (MAASFPEGVPETEDGKRPQF). S-adenosyl-L-methionine-binding residues include W78, Y82, G181, D206, D232, L233, and I253.

Belongs to the methyltransferase superfamily. METL family. As to quaternary structure, monomer. Interacts with DALRD3.

It is found in the cytoplasm. It catalyses the reaction cytidine(32) in tRNA(Thr) + S-adenosyl-L-methionine = N(3)-methylcytidine(32) in tRNA(Thr) + S-adenosyl-L-homocysteine + H(+). The enzyme catalyses cytidine(32) in tRNA(Arg)(CCU) + S-adenosyl-L-methionine = N(3)-methylcytidine(32) in tRNA(Arg)(CCU) + S-adenosyl-L-homocysteine + H(+). In terms of biological role, S-adenosyl-L-methionine-dependent methyltransferase that mediates N(3)-methylcytidine modification of residue 32 of the tRNA anticodon loop of tRNA(Thr)(UGU) and tRNA(Arg)(CCU). N(3)-methylcytidine methylation by METTL2 requires the N6-threonylcarbamoylation of tRNA (t6A37) by the EKC/KEOPS complex as prerequisite. This chain is tRNA N(3)-cytidine methyltransferase METTL2, found in Mus musculus (Mouse).